The sequence spans 165 residues: Probable deoxyuridine 5'-triphosphate nucleotidohydrolase (165 aa).

Residues 39–49 are compositionally biased toward basic and acidic residues; it reads GRIDTDGKTIG. The segment at 39–64 is disordered; sequence GRIDTDGKTIGDRSPVTPTADEDSTD.

It belongs to the dCTP deaminase family. Archaeal dUTPase subfamily.

The catalysed reaction is dUTP + H2O = dUMP + diphosphate + H(+). It participates in pyrimidine metabolism; dUMP biosynthesis; dUMP from dCTP (dUTP route): step 2/2. Functionally, this enzyme is involved in nucleotide metabolism: it produces dUMP, the immediate precursor of thymidine nucleotides and it decreases the intracellular concentration of dUTP so that uracil cannot be incorporated into DNA. This chain is Probable deoxyuridine 5'-triphosphate nucleotidohydrolase, found in Halobacterium salinarum (strain ATCC 29341 / DSM 671 / R1).